We begin with the raw amino-acid sequence, 117 residues long: Ubiquitin-like protein pmt3/smt3 (117 aa).

Positions 1-37 (MSESPSANISDADKSAITPTTGDTSQQDVKPSTEHIN) are disordered. Over residues 17 to 30 (ITPTTGDTSQQDVK) the composition is skewed to polar residues. A Ubiquitin-like domain is found at 35-115 (HINLKVVGQD…LEQLGGCTHL (81 aa)). Glycine 111 participates in a covalent cross-link: Glycyl lysine isopeptide (Gly-Lys) (interchain with K-? in acceptor proteins). The propeptide occupies 112-117 (CTHLCL).

The protein belongs to the ubiquitin family. SUMO subfamily. Interacts with rfp1.

It localises to the nucleus. Functionally, required for chromosome segregation where it may be involved in microtubule assembly. Loss of smt3 leads to an increase in telomere length. In Schizosaccharomyces pombe (strain 972 / ATCC 24843) (Fission yeast), this protein is Ubiquitin-like protein pmt3/smt3 (pmt3).